A 286-amino-acid polypeptide reads, in one-letter code: S-methyl-5'-thioadenosine phosphorylase (286 aa).

Phosphate-binding positions include Ser-11, 53–54 (RH), and 86–87 (SA). Residue Met-185 participates in substrate binding. A phosphate-binding site is contributed by Thr-186. 209–211 (DYD) is a substrate binding site.

Belongs to the PNP/MTAP phosphorylase family. MTAP subfamily. In terms of assembly, homohexamer. Dimer of a homotrimer.

It catalyses the reaction S-methyl-5'-thioadenosine + phosphate = 5-(methylsulfanyl)-alpha-D-ribose 1-phosphate + adenine. The protein operates within amino-acid biosynthesis; L-methionine biosynthesis via salvage pathway; S-methyl-5-thio-alpha-D-ribose 1-phosphate from S-methyl-5'-thioadenosine (phosphorylase route): step 1/1. Catalyzes the reversible phosphorylation of S-methyl-5'-thioadenosine (MTA) to adenine and 5-methylthioribose-1-phosphate. Involved in the breakdown of MTA, a major by-product of polyamine biosynthesis. Responsible for the first step in the methionine salvage pathway after MTA has been generated from S-adenosylmethionine. Has broad substrate specificity with 6-aminopurine nucleosides as preferred substrates. This chain is S-methyl-5'-thioadenosine phosphorylase, found in Geobacter sulfurreducens (strain ATCC 51573 / DSM 12127 / PCA).